The primary structure comprises 414 residues: Clusterin-associated protein 1 (414 aa).

The stretch at 198-291 forms a coiled coil; it reads KTKDLLNNVA…ERFEEAKNTL (94 aa). The disordered stretch occupies residues 305–414; sequence LLKSGSNDDS…EPLDESDNDF (110 aa). Acidic residues-rich tracts occupy residues 312-328 and 360-389; these read DDSD…DSEL and DSDD…EDES. Phosphoserine occurs at positions 314, 324, and 326. At Ser410 the chain carries Phosphoserine.

The protein belongs to the CLUAP1 family. Interacts with CLU/clusterin. Interacts with UBXN10; the interaction is direct.

The protein resides in the cell projection. It localises to the cilium. The protein localises to the nucleus. Its function is as follows. Required for cilia biogenesis. Appears to function within the multiple intraflagellar transport complex B (IFT-B). Key regulator of hedgehog signaling. This chain is Clusterin-associated protein 1 (CLUAP1), found in Macaca fascicularis (Crab-eating macaque).